We begin with the raw amino-acid sequence, 295 residues long: Autophagy-related protein 37 (295 aa).

The ACB domain maps to 5-103 (VDRVFVHALN…LIDTMHRYAT (99 aa)). Disordered stretches follow at residues 124–162 (NSPS…PLKE) and 174–201 (LRSQ…RWQR). Residues 125-153 (SPSSSLSSPRPNQSTGAGAQQPQQEPEQA) show a composition bias toward low complexity. N-linked (GlcNAc...) asparagine glycosylation is present at N136. Residues 244-264 (WLLVKHIFADLVILSVVLLWL) traverse the membrane as a helical segment.

The protein belongs to the ATG37 family.

It is found in the peroxisome membrane. Acyl-CoA binding protein which acts as the peroxisome receptor for pexophagy. Required for both micropexophagy and macropexophagy, but not for the cytoplasm to vacuole transport (Cvt) or autophagy pathways. Required for functional micropexophagic apparatus (MIPA) and relocation of ATG11 to the peroxisome-sequestering arms of the vacuole. Binds palmitoyl-CoA but not oleyl-CoA. This Gibberella zeae (strain ATCC MYA-4620 / CBS 123657 / FGSC 9075 / NRRL 31084 / PH-1) (Wheat head blight fungus) protein is Autophagy-related protein 37.